The following is a 140-amino-acid chain: MVVKAIARNSIGRNGVGAFVFPCRKITLQFCNWGGSSEGMRKFLTSKRLDKWGQEFPWIQFEVMRKSGHPLLRAEYTNGREKVICVRNLNIDNVENKLKLLKDSDGDILRRRTKNDNVESLNSSVRGIWSPLHAAKRHRI.

This sequence belongs to the mitochondrion-specific ribosomal protein mL43 family. Component of the mitochondrial large ribosomal subunit (mt-LSU). Mature yeast 74S mitochondrial ribosomes consist of a small (37S) and a large (54S) subunit. The 37S small subunit contains a 15S ribosomal RNA (15S mt-rRNA) and 34 different proteins. The 54S large subunit contains a 21S rRNA (21S mt-rRNA) and 46 different proteins.

It is found in the mitochondrion. Component of the mitochondrial ribosome (mitoribosome), a dedicated translation machinery responsible for the synthesis of mitochondrial genome-encoded proteins, including at least some of the essential transmembrane subunits of the mitochondrial respiratory chain. The mitoribosomes are attached to the mitochondrial inner membrane and translation products are cotranslationally integrated into the membrane. Also has an extraribosomal function, being essential for mitochondrial genome integrity. May interact with MHR1 to take part in the mtDNA repair mechanism. The polypeptide is Large ribosomal subunit protein mL43 (MRPL51) (Saccharomyces cerevisiae (strain ATCC 204508 / S288c) (Baker's yeast)).